Consider the following 169-residue polypeptide: Putative antitoxin Rv0268c (169 aa).

The span at 1–11 (MGTRSKSRTRQ) shows a compositional bias: basic residues. The disordered stretch occupies residues 1–35 (MGTRSKSRTRQLKQSNGCTATTSGASDRRRRARRR). Positions 120 to 153 (AAILISAERYESLMEELEDLRDRLSVHEREHVTM) form a coiled coil.

Belongs to the phD/YefM antitoxin family.

Putative antitoxin component of a type II toxin-antitoxin (TA) system; however the expected toxin coding sequence is not found adjacent to this gene. This Mycobacterium tuberculosis (strain ATCC 25618 / H37Rv) protein is Putative antitoxin Rv0268c.